The chain runs to 477 residues: Aspartyl/glutamyl-tRNA(Asn/Gln) amidotransferase subunit B (477 aa).

This sequence belongs to the GatB/GatE family. GatB subfamily. Heterotrimer of A, B and C subunits.

It catalyses the reaction L-glutamyl-tRNA(Gln) + L-glutamine + ATP + H2O = L-glutaminyl-tRNA(Gln) + L-glutamate + ADP + phosphate + H(+). It carries out the reaction L-aspartyl-tRNA(Asn) + L-glutamine + ATP + H2O = L-asparaginyl-tRNA(Asn) + L-glutamate + ADP + phosphate + 2 H(+). Allows the formation of correctly charged Asn-tRNA(Asn) or Gln-tRNA(Gln) through the transamidation of misacylated Asp-tRNA(Asn) or Glu-tRNA(Gln) in organisms which lack either or both of asparaginyl-tRNA or glutaminyl-tRNA synthetases. The reaction takes place in the presence of glutamine and ATP through an activated phospho-Asp-tRNA(Asn) or phospho-Glu-tRNA(Gln). The polypeptide is Aspartyl/glutamyl-tRNA(Asn/Gln) amidotransferase subunit B (Methylobacillus flagellatus (strain ATCC 51484 / DSM 6875 / VKM B-1610 / KT)).